A 778-amino-acid chain; its full sequence is Endonuclease MutS2 (778 aa).

Position 328-335 (328-335) interacts with ATP; the sequence is GPNTGGKT. The region spanning 703–778 is the Smr domain; that stretch reads LDLRGKRYEE…GSGCTIANLG (76 aa).

Belongs to the DNA mismatch repair MutS family. MutS2 subfamily. In terms of assembly, homodimer. Binds to stalled ribosomes, contacting rRNA.

In terms of biological role, endonuclease that is involved in the suppression of homologous recombination and thus may have a key role in the control of bacterial genetic diversity. Functionally, acts as a ribosome collision sensor, splitting the ribosome into its 2 subunits. Detects stalled/collided 70S ribosomes which it binds and splits by an ATP-hydrolysis driven conformational change. Acts upstream of the ribosome quality control system (RQC), a ribosome-associated complex that mediates the extraction of incompletely synthesized nascent chains from stalled ribosomes and their subsequent degradation. Probably generates substrates for RQC. This Streptococcus equi subsp. zooepidemicus (strain H70) protein is Endonuclease MutS2.